The following is a 709-amino-acid chain: Polyribonucleotide nucleotidyltransferase (709 aa).

2 residues coordinate Mg(2+): D487 and D493. The KH domain occupies 554-613 (PRIHTMKISSDKIKDVIGKGGAVIRALCEETGTTIEIEDDGTIKIAATEGAAAKEAIRRI). An S1 motif domain is found at 623–691 (GKIYTGKVMR…RQGRIRLSIK (69 aa)).

It belongs to the polyribonucleotide nucleotidyltransferase family. In terms of assembly, component of the RNA degradosome, which is a multiprotein complex involved in RNA processing and mRNA degradation. Requires Mg(2+) as cofactor.

It localises to the cytoplasm. The enzyme catalyses RNA(n+1) + phosphate = RNA(n) + a ribonucleoside 5'-diphosphate. Involved in mRNA degradation. Catalyzes the phosphorolysis of single-stranded polyribonucleotides processively in the 3'- to 5'-direction. This Aliivibrio fischeri (strain ATCC 700601 / ES114) (Vibrio fischeri) protein is Polyribonucleotide nucleotidyltransferase.